The following is a 286-amino-acid chain: Bifunctional protein FolD (286 aa).

NADP(+) is bound by residues 164–166, isoleucine 189, and isoleucine 230; that span reads GAS.

This sequence belongs to the tetrahydrofolate dehydrogenase/cyclohydrolase family. In terms of assembly, homodimer.

The catalysed reaction is (6R)-5,10-methylene-5,6,7,8-tetrahydrofolate + NADP(+) = (6R)-5,10-methenyltetrahydrofolate + NADPH. It carries out the reaction (6R)-5,10-methenyltetrahydrofolate + H2O = (6R)-10-formyltetrahydrofolate + H(+). It functions in the pathway one-carbon metabolism; tetrahydrofolate interconversion. Its function is as follows. Catalyzes the oxidation of 5,10-methylenetetrahydrofolate to 5,10-methenyltetrahydrofolate and then the hydrolysis of 5,10-methenyltetrahydrofolate to 10-formyltetrahydrofolate. The chain is Bifunctional protein FolD from Wolinella succinogenes (strain ATCC 29543 / DSM 1740 / CCUG 13145 / JCM 31913 / LMG 7466 / NCTC 11488 / FDC 602W) (Vibrio succinogenes).